A 353-amino-acid chain; its full sequence is MRIEKDKELMNILKIMAPGTPLREGLENILRAKTGGLLILGDSDQILKLVDGGFKINSEYSPSYVYELAKMDGSIVLSSDLKKILCANAQLIPDSSIPTFETGTRHRTADRVAKQTGAIVIAISQRRNIITVYKGGIKYVLRDSSIILARANQALQTLEKYVAVLDRVVNNLNILEFKDIATLFDVVTAVQRSEMVMRIVSEIERYICELGNEGRLIDMQLSELIKSVEEDGILLIRDYCRSNMEYEDIYKQIQGLSSEELLNLDGLSKIIGYTGVPLVDTLISPRGYRMINKIPRIPSNVIENLVANFNQLKCVMEASYEQLDNVEGIGEARAKAIKNGLRRLREQIMLDKV.

Positions 6-144 constitute a DAC domain; sequence DKELMNILKI…GGIKYVLRDS (139 aa). ATP contacts are provided by residues Gly-73, Leu-91, and 104–108; that span reads TRHRT.

This sequence belongs to the DisA family. Homooctamer. Requires Mg(2+) as cofactor.

The enzyme catalyses 2 ATP = 3',3'-c-di-AMP + 2 diphosphate. In terms of biological role, participates in a DNA-damage check-point that is active prior to asymmetric division when DNA is damaged. DisA forms globular foci that rapidly scan along the chromosomes during sporulation, searching for lesions. When a lesion is present, DisA pauses at the lesion site. This triggers a cellular response that culminates in a temporary block in sporulation initiation. Functionally, also has diadenylate cyclase activity, catalyzing the condensation of 2 ATP molecules into cyclic di-AMP (c-di-AMP). c-di-AMP acts as a signaling molecule that couples DNA integrity with progression of sporulation. The rise in c-di-AMP level generated by DisA while scanning the chromosome, operates as a positive signal that advances sporulation; upon encountering a lesion, the DisA focus arrests at the damaged site and halts c-di-AMP synthesis. This chain is DNA integrity scanning protein DisA, found in Clostridium botulinum (strain Kyoto / Type A2).